A 120-amino-acid polypeptide reads, in one-letter code: FK506-binding protein 1B (120 aa).

Positions Met-1–Gly-24 are disordered. The region spanning Gly-24–Gly-120 is the PPIase FKBP-type domain.

Belongs to the FKBP-type PPIase family. FKBP1 subfamily.

It carries out the reaction [protein]-peptidylproline (omega=180) = [protein]-peptidylproline (omega=0). Functionally, PPIases accelerate the folding of proteins. It catalyzes the cis-trans isomerization of proline imidic peptide bonds in oligopeptides. This is FK506-binding protein 1B (FKBP3) from Emericella nidulans (strain FGSC A4 / ATCC 38163 / CBS 112.46 / NRRL 194 / M139) (Aspergillus nidulans).